The following is a 185-amino-acid chain: Ribosome-recycling factor (185 aa).

It belongs to the RRF family.

It is found in the cytoplasm. Its function is as follows. Responsible for the release of ribosomes from messenger RNA at the termination of protein biosynthesis. May increase the efficiency of translation by recycling ribosomes from one round of translation to another. This Listeria welshimeri serovar 6b (strain ATCC 35897 / DSM 20650 / CCUG 15529 / CIP 8149 / NCTC 11857 / SLCC 5334 / V8) protein is Ribosome-recycling factor.